The primary structure comprises 261 residues: MAAAVAGMLRGGLLPQAGRLPTLQTVRYGSKAVTRHRRVMHFQRQKLMAVTEYIPPKPAIHPSCLPSPPSPPQEEIGLIRLLRREIAAVFQDNRMIAVCQNVALSAEDKLLMRHQLRKHKILMKVFPNQVLKPFLEDSKYQNLLPLFVGHNMLLVSEEPKVKEMVRILRTVPFLPLLGGCIDDTILSRQGFINYSKLPSLPLVQGELVGGLTCLTAQTHSLLQHQPLQLTTLLDQYIREQREKDSVMSANGKPDPDTVPDS.

Residues 1-28 constitute a mitochondrion transit peptide; the sequence is MAAAVAGMLRGGLLPQAGRLPTLQTVRY. The segment at 242 to 261 is disordered; the sequence is EKDSVMSANGKPDPDTVPDS.

This sequence belongs to the universal ribosomal protein uL10 family. In terms of assembly, component of the mitochondrial large ribosomal subunit (mt-LSU). Mature mammalian 55S mitochondrial ribosomes consist of a small (28S) and a large (39S) subunit. The 28S small subunit contains a 12S ribosomal RNA (12S mt-rRNA) and 30 different proteins. The 39S large subunit contains a 16S rRNA (16S mt-rRNA), a copy of mitochondrial valine transfer RNA (mt-tRNA(Val)), which plays an integral structural role, and 52 different proteins. uL10m contributes a single cysteine residue to a zinc-binding site with mL66.

It is found in the mitochondrion. In Homo sapiens (Human), this protein is Large ribosomal subunit protein uL10m (MRPL10).